The chain runs to 572 residues: Arginine--tRNA ligase (572 aa).

Positions 122 to 132 (PNLAKEMHVGH) match the 'HIGH' region motif.

Belongs to the class-I aminoacyl-tRNA synthetase family. Monomer.

The protein resides in the cytoplasm. The catalysed reaction is tRNA(Arg) + L-arginine + ATP = L-arginyl-tRNA(Arg) + AMP + diphosphate. The chain is Arginine--tRNA ligase from Neisseria meningitidis serogroup A / serotype 4A (strain DSM 15465 / Z2491).